The sequence spans 132 residues: Small ribosomal subunit protein uS8 (132 aa).

Belongs to the universal ribosomal protein uS8 family. Part of the 30S ribosomal subunit. Contacts proteins S5 and S12.

Its function is as follows. One of the primary rRNA binding proteins, it binds directly to 16S rRNA central domain where it helps coordinate assembly of the platform of the 30S subunit. This Xylella fastidiosa (strain 9a5c) protein is Small ribosomal subunit protein uS8.